An 81-amino-acid polypeptide reads, in one-letter code: Cell division protein ZapB (81 aa).

The stretch at 5–81 (LEVFEKLESK…QALLGRMEEV (77 aa)) forms a coiled coil. Positions 43 to 64 (VQSAQHGREELERENSQLKEQQ) are disordered. The span at 48–59 (HGREELERENSQ) shows a compositional bias: basic and acidic residues.

This sequence belongs to the ZapB family. As to quaternary structure, homodimer. The ends of the coiled-coil dimer bind to each other, forming polymers. Interacts with FtsZ.

The protein localises to the cytoplasm. Functionally, non-essential, abundant cell division factor that is required for proper Z-ring formation. It is recruited early to the divisome by direct interaction with FtsZ, stimulating Z-ring assembly and thereby promoting cell division earlier in the cell cycle. Its recruitment to the Z-ring requires functional FtsA or ZipA. This chain is Cell division protein ZapB, found in Klebsiella pneumoniae subsp. pneumoniae (strain ATCC 700721 / MGH 78578).